The sequence spans 182 residues: Lipoprotein signal peptidase (182 aa).

The next 4 membrane-spanning stretches (helical) occupy residues 15–35, 44–64, 65–85, and 97–117; these read LYIGVIFLGIILDLVTKFLVI, LEVLGSFFRMTLTFNTGFVFG, AFQDNAIPSLIATGIAIVFLI, and PWGWNLVMAGAFGNFLDKFFV. Active-site residues include aspartate 140 and aspartate 162. Residues 155-175 form a helical membrane-spanning segment; the sequence is WPAFNVADSCVTIGLTILIFT.

It belongs to the peptidase A8 family.

The protein localises to the cell inner membrane. It carries out the reaction Release of signal peptides from bacterial membrane prolipoproteins. Hydrolyzes -Xaa-Yaa-Zaa-|-(S,diacylglyceryl)Cys-, in which Xaa is hydrophobic (preferably Leu), and Yaa (Ala or Ser) and Zaa (Gly or Ala) have small, neutral side chains.. It functions in the pathway protein modification; lipoprotein biosynthesis (signal peptide cleavage). This protein specifically catalyzes the removal of signal peptides from prolipoproteins. The polypeptide is Lipoprotein signal peptidase (Leptospira borgpetersenii serovar Hardjo-bovis (strain L550)).